The following is a 180-amino-acid chain: UPF0227 protein YpsIP31758_1593 (180 aa).

It belongs to the UPF0227 family.

In Yersinia pseudotuberculosis serotype O:1b (strain IP 31758), this protein is UPF0227 protein YpsIP31758_1593.